The chain runs to 532 residues: Zinc finger protein ZIC 2 (532 aa).

The necessary for interaction with MDFIC and transcriptional activation or repression stretch occupies residues 100 to 255; that stretch reads PHAAHVGSYS…YMRQQCIKQE (156 aa). Phosphoserine occurs at positions 191 and 199. Lys-253 is covalently cross-linked (Glycyl lysine isopeptide (Lys-Gly) (interchain with G-Cter in SUMO2)). The C2H2-type 1; atypical zinc-finger motif lies at 256 to 291; that stretch reads LICKWIDPEQLSNPKKSCNKTFSTMHELVTHVSVEH. Residues 300-327 form a C2H2-type 2; atypical zinc finger; that stretch reads HVCFWEECPREGKPFKAKYKLVNHIRVH. 3 C2H2-type zinc fingers span residues 333-357, 363-387, and 393-415; these read FPCPFPGCGKVFARSENLKIHKRTH, FQCEFEGCDRRFANSSDRKKHMHVH, and YLCKMCDKSYTHPSSLRKHMKVH. Disordered regions lie at residues 406 to 452 and 475 to 532; these read SSLR…SSSN and HRGG…EWYV. Residues 417 to 435 are compositionally biased toward low complexity; the sequence is SSPQGSESSPAASSGYESS. Positions 476-521 are enriched in gly residues; that stretch reads RGGGSGSGGAGGGSGGGSGSGGGGGGAGGGGGGSSGGGSGTAGGHS. The segment covering 523–532 has biased composition (polar residues); the sequence is LSSNFNEWYV.

This sequence belongs to the GLI C2H2-type zinc-finger protein family. In terms of assembly, interacts with RNF180. Interacts (via the C2H2-type domains 3, 4 and 5) with MDFIC (via the C2H2-type domains 3, 4 and 5); the interaction reduces its transcriptional activity. Interacts with GLI1 and GLI2. Interacts (via C2H2-type domain 3) with DHX9. Post-translationally, phosphorylated. Ubiquitinated by RNF180, leading to its degradation.

The protein localises to the nucleus. Its subcellular location is the cytoplasm. In terms of biological role, acts as a transcriptional activator or repressor. Plays important roles in the early stage of organogenesis of the CNS. Activates the transcription of the serotonin transporter SERT in uncrossed ipsilateral retinal ganglion cells (iRGCs) to refine eye-specific projections in primary visual targets. Its transcriptional activity is repressed by MDFIC. Involved in the formation of the ipsilateral retinal projection at the optic chiasm midline. Drives the expression of EPHB1 on ipsilaterally projecting growth cones. Binds to the minimal GLI-consensus sequence 5'-TGGGTGGTC-3'. Associates to the basal SERT promoter region from ventrotemporal retinal segments of retinal embryos. The chain is Zinc finger protein ZIC 2 (ZIC2) from Homo sapiens (Human).